A 361-amino-acid chain; its full sequence is Protein-glutamate methylesterase/protein-glutamine glutaminase 1 (361 aa).

In terms of domain architecture, Response regulatory spans 10–127 (KVLVVDDSAL…REGIEEKAQE (118 aa)). Residue D61 is modified to 4-aspartylphosphate. The CheB-type methylesterase domain maps to 167–359 (FATTDKLIAV…ASVKRWYAEN (193 aa)). Active-site residues include S179, H205, and D301.

This sequence belongs to the CheB family. Post-translationally, phosphorylated by CheA. Phosphorylation of the N-terminal regulatory domain activates the methylesterase activity.

The protein resides in the cytoplasm. The catalysed reaction is [protein]-L-glutamate 5-O-methyl ester + H2O = L-glutamyl-[protein] + methanol + H(+). It carries out the reaction L-glutaminyl-[protein] + H2O = L-glutamyl-[protein] + NH4(+). Involved in chemotaxis. Part of a chemotaxis signal transduction system that modulates chemotaxis in response to various stimuli. Catalyzes the demethylation of specific methylglutamate residues introduced into the chemoreceptors (methyl-accepting chemotaxis proteins or MCP) by CheR. Also mediates the irreversible deamidation of specific glutamine residues to glutamic acid. The polypeptide is Protein-glutamate methylesterase/protein-glutamine glutaminase 1 (Hahella chejuensis (strain KCTC 2396)).